The primary structure comprises 231 residues: Ribosomal RNA small subunit methyltransferase G (231 aa).

S-adenosyl-L-methionine contacts are provided by residues glycine 75, 125–126 (GE), and arginine 140. Residues 204–213 (AEAEEGDSPE) show a composition bias toward acidic residues. The disordered stretch occupies residues 204 to 231 (AEAEEGDSPEAADASRGVILELTKKNKG).

This sequence belongs to the methyltransferase superfamily. RNA methyltransferase RsmG family.

The protein localises to the cytoplasm. In terms of biological role, specifically methylates the N7 position of a guanine in 16S rRNA. This is Ribosomal RNA small subunit methyltransferase G from Rhodopirellula baltica (strain DSM 10527 / NCIMB 13988 / SH1).